A 986-amino-acid chain; its full sequence is Zinc finger protein 445 (986 aa).

Residues 52-134 (RQLFRQLRYH…ALLEELQRDL (83 aa)) enclose the SCAN box domain. Residues 219–289 (LTFQDVEVTF…NICTVQLKRD (71 aa)) enclose the KRAB domain. Glycyl lysine isopeptide (Lys-Gly) (interchain with G-Cter in SUMO2) cross-links involve residues K302, K360, and K385. The segment at 433–460 (QNTGLKENGKDRYGETSRKSWHAHPEHR) is disordered. Basic and acidic residues predominate over residues 439-460 (ENGKDRYGETSRKSWHAHPEHR). C2H2-type zinc fingers lie at residues 470–492 (FQCR…EKIH) and 498–520 (YQCS…QKTH). K524 participates in a covalent cross-link: Glycyl lysine isopeptide (Lys-Gly) (interchain with G-Cter in SUMO2). C2H2-type zinc fingers lie at residues 553–575 (LHCN…QRIH) and 581–604 (YKCT…KLHH). K609 participates in a covalent cross-link: Glycyl lysine isopeptide (Lys-Gly) (interchain with G-Cter in SUMO2). 2 C2H2-type zinc fingers span residues 634-656 (FPCQ…QRIH) and 662-686 (YQCS…RTQH). K691 is covalently cross-linked (Glycyl lysine isopeptide (Lys-Gly) (interchain with G-Cter in SUMO2)). 4 C2H2-type zinc fingers span residues 718–740 (NKCK…ERVH), 746–768 (YQCR…QRKH), 796–818 (FWCQ…KGIH), and 824–846 (FKCN…QRIH). K929 is covalently cross-linked (Glycyl lysine isopeptide (Lys-Gly) (interchain with G-Cter in SUMO2)). 2 consecutive C2H2-type zinc fingers follow at residues 933–955 (HKCS…KRCH) and 961–983 (FKCI…MKNH).

The protein belongs to the krueppel C2H2-type zinc-finger protein family.

It localises to the nucleus. Functionally, transcription regulator required to maintain maternal and paternal gene imprinting, a process by which gene expression is restricted in a parent of origin-specific manner by epigenetic modification of genomic DNA and chromatin, including DNA methylation. Acts by controlling DNA methylation during the earliest multicellular stages of development at multiple imprinting control regions (ICRs). Acts together with ZFP57, but ZFP57 plays the predominant role in imprinting maintenance. In contrast, ZNF445 seems to be the major factor in human early embryonic imprinting maintenance. The polypeptide is Zinc finger protein 445 (Znf445) (Mus musculus (Mouse)).